Reading from the N-terminus, the 932-residue chain is RNA-binding protein 12 (932 aa).

A disordered region spans residues 97–116 (IPPANASRSGPPPSSGMSGR). Over residues 98-116 (PPANASRSGPPPSSGMSGR) the composition is skewed to low complexity. The RRM 1 domain maps to 304-379 (LYVSVHGMPF…RYVEVSPATE (76 aa)). A phosphoserine mark is found at Ser-352 and Ser-375. 2 stretches are compositionally biased toward polar residues: residues 392-401 (KQNMGPSGQT) and 408-417 (LPRSKSPSGQ). Positions 392-424 (KQNMGPSGQTHPPPQTLPRSKSPSGQKRSRSRS) are disordered. Ser-420, Ser-422, and Ser-424 each carry phosphoserine. Residues 430–507 (FCVYLKGLPF…RFIQVHPITK (78 aa)) enclose the RRM 2 domain. Ser-525 carries the phosphoserine modification. Low complexity predominate over residues 717–734 (NGPPFNFPGNFGGSNAFG). Residues 717-855 (NGPPFNFPGN…PGFASSSGKP (139 aa)) are disordered. Positions 783-811 (SGFGGGPQNFGNGPGSLGGPPGFGSGPPG) are enriched in gly residues. Pro residues predominate over residues 824-838 (AFGPGPGPGPGPGPG). One can recognise an RRM 3 domain in the interval 856-932 (GPTVIKVQNM…PIGSRKVNLY (77 aa)).

The protein resides in the nucleus. The protein is RNA-binding protein 12 (RBM12) of Pongo abelii (Sumatran orangutan).